Reading from the N-terminus, the 66-residue chain is Surface composition regulator (66 aa).

Belongs to the GlgS family.

Major determinant of cell surface composition. Negatively regulates motility, adhesion and synthesis of biofilm exopolysaccharides. In Escherichia coli O127:H6 (strain E2348/69 / EPEC), this protein is Surface composition regulator.